The sequence spans 404 residues: Argininosuccinate synthase (404 aa).

ATP contacts are provided by residues 10–18 and Ala37; that span reads AYSGGLDTS. Positions 89 and 94 each coordinate L-citrulline. Position 119 (Gly119) interacts with ATP. Thr121, Asn125, and Asp126 together coordinate L-aspartate. Asn125 is a binding site for L-citrulline. The L-citrulline site is built by Arg129, Ser178, Ser187, Glu263, and Tyr275.

This sequence belongs to the argininosuccinate synthase family. Type 1 subfamily. In terms of assembly, homotetramer.

The protein localises to the cytoplasm. It catalyses the reaction L-citrulline + L-aspartate + ATP = 2-(N(omega)-L-arginino)succinate + AMP + diphosphate + H(+). Its pathway is amino-acid biosynthesis; L-arginine biosynthesis; L-arginine from L-ornithine and carbamoyl phosphate: step 2/3. The protein is Argininosuccinate synthase of Photobacterium profundum (strain SS9).